The primary structure comprises 56 residues: Large ribosomal subunit protein bL32 (56 aa).

Positions 1-36 (MAVQQNKKSRSKRGMRRSHDALSTAQLSVDATSGEV) are disordered. Residues 7-16 (KKSRSKRGMR) show a composition bias toward basic residues. Polar residues predominate over residues 21–31 (ALSTAQLSVDA).

This sequence belongs to the bacterial ribosomal protein bL32 family.

The protein is Large ribosomal subunit protein bL32 of Shewanella oneidensis (strain ATCC 700550 / JCM 31522 / CIP 106686 / LMG 19005 / NCIMB 14063 / MR-1).